A 416-amino-acid chain; its full sequence is Glutamyl-tRNA reductase (416 aa).

Substrate-binding positions include 49–52, Ser105, 110–112, and Gln116; these read TCNR and EPQ. The active-site Nucleophile is the Cys50. NADP(+) is bound at residue 185–190; that stretch reads GAGETI.

The protein belongs to the glutamyl-tRNA reductase family. In terms of assembly, homodimer.

It catalyses the reaction (S)-4-amino-5-oxopentanoate + tRNA(Glu) + NADP(+) = L-glutamyl-tRNA(Glu) + NADPH + H(+). The protein operates within porphyrin-containing compound metabolism; protoporphyrin-IX biosynthesis; 5-aminolevulinate from L-glutamyl-tRNA(Glu): step 1/2. Its function is as follows. Catalyzes the NADPH-dependent reduction of glutamyl-tRNA(Glu) to glutamate 1-semialdehyde (GSA). In Shewanella denitrificans (strain OS217 / ATCC BAA-1090 / DSM 15013), this protein is Glutamyl-tRNA reductase.